The primary structure comprises 664 residues: DNA ligase (664 aa).

NAD(+)-binding positions include 32-36 and 80-81; these read DKEYD and SL. The N6-AMP-lysine intermediate role is filled by K122. Positions 144, 178, and 314 each coordinate NAD(+). C407, C410, C423, and C429 together coordinate Zn(2+). The region spanning 587–664 is the BRCT domain; sequence IDENPFMGKT…NEEEFSNKIK (78 aa).

It belongs to the NAD-dependent DNA ligase family. LigA subfamily. The cofactor is Mg(2+). It depends on Mn(2+) as a cofactor.

It carries out the reaction NAD(+) + (deoxyribonucleotide)n-3'-hydroxyl + 5'-phospho-(deoxyribonucleotide)m = (deoxyribonucleotide)n+m + AMP + beta-nicotinamide D-nucleotide.. DNA ligase that catalyzes the formation of phosphodiester linkages between 5'-phosphoryl and 3'-hydroxyl groups in double-stranded DNA using NAD as a coenzyme and as the energy source for the reaction. It is essential for DNA replication and repair of damaged DNA. The sequence is that of DNA ligase from Clostridium botulinum (strain Kyoto / Type A2).